A 590-amino-acid polypeptide reads, in one-letter code: Beta-(1--&gt;2)glucan export ATP-binding/permease protein NdvA (590 aa).

The ABC transmembrane type-1 domain maps to 21–301 (VALICGANVA…MSAFANQISE (281 aa)). Helical transmembrane passes span 22-42 (ALICGANVALAAIAILEPIMF), 55-75 (VFSTLAVWAGLGAFNVIAFVL), 136-156 (QHLSTAVALVLLVPTALSMDV), 158-178 (MSMVLLGLGVLYVGIGRLVMK), 248-268 (LSSTISMMVVLLIGAYLVTHG), and 275-295 (VIAFTGFATLLISRLDQMSAF). Positions 335-569 (VRFEDVGFEF…NGRFASLLRA (235 aa)) constitute an ABC transporter domain. An ATP-binding site is contributed by 368–375 (GPTGAGKT).

Belongs to the ABC transporter superfamily. Beta-(1--&gt;2)glucan exporter (TC 3.A.1.108.1) family. In terms of assembly, homodimer.

Its subcellular location is the cell inner membrane. The catalysed reaction is [(1-&gt;2)-beta-D-glucosyl](n)(in) + ATP + H2O = [(1-&gt;2)-beta-D-glucosyl](n)(out) + ADP + phosphate + H(+). In terms of biological role, involved in beta-(1--&gt;2)glucan export. Transmembrane domains (TMD) form a pore in the inner membrane and the ATP-binding domain (NBD) is responsible for energy generation. This chain is Beta-(1--&gt;2)glucan export ATP-binding/permease protein NdvA, found in Mesorhizobium japonicum (strain LMG 29417 / CECT 9101 / MAFF 303099) (Mesorhizobium loti (strain MAFF 303099)).